The primary structure comprises 383 residues: 3-dehydroquinate synthase (383 aa).

NAD(+) contacts are provided by residues 81 to 86, 115 to 119, 139 to 140, lysine 152, and lysine 161; these read EGEVSK, GVVGD, and TS. Zn(2+) contacts are provided by glutamate 194, histidine 256, and histidine 274.

It belongs to the sugar phosphate cyclases superfamily. Dehydroquinate synthase family. It depends on Co(2+) as a cofactor. Requires Zn(2+) as cofactor. NAD(+) is required as a cofactor.

The protein resides in the cytoplasm. It catalyses the reaction 7-phospho-2-dehydro-3-deoxy-D-arabino-heptonate = 3-dehydroquinate + phosphate. It functions in the pathway metabolic intermediate biosynthesis; chorismate biosynthesis; chorismate from D-erythrose 4-phosphate and phosphoenolpyruvate: step 2/7. Catalyzes the conversion of 3-deoxy-D-arabino-heptulosonate 7-phosphate (DAHP) to dehydroquinate (DHQ). The sequence is that of 3-dehydroquinate synthase from Nitrobacter hamburgensis (strain DSM 10229 / NCIMB 13809 / X14).